The chain runs to 291 residues: Nucleotide-binding protein CMM_1747 (291 aa).

15–22 (GMSGAGRS) is a binding site for ATP. 66–69 (DVRG) contacts GTP.

It belongs to the RapZ-like family.

Displays ATPase and GTPase activities. The chain is Nucleotide-binding protein CMM_1747 from Clavibacter michiganensis subsp. michiganensis (strain NCPPB 382).